The primary structure comprises 270 residues: 1-deoxy-11-beta-hydroxypentalenate dehydrogenase (270 aa).

12-36 (GAASGIGFALSARLAQAGARVVMTD) contributes to the NAD(+) binding site. A substrate-binding site is contributed by S144. The active-site Proton acceptor is Y157. K161 provides a ligand contact to NAD(+).

The protein belongs to the short-chain dehydrogenases/reductases (SDR) family.

The catalysed reaction is 1-deoxy-11beta-hydroxypentalenate + NAD(+) = 1-deoxy-11-oxopentalenate + NADH + H(+). It participates in antibiotic biosynthesis; neopentalenolactone biosynthesis. In terms of biological role, catalyzes the oxidation of 1-deoxy-11-beta-hydroxypentalenic acid to 1-deoxy-11-oxopentalenic acid in the biosynthesis of neopentalenolactone antibiotic. The protein is 1-deoxy-11-beta-hydroxypentalenate dehydrogenase (ptlF) of Streptomyces avermitilis (strain ATCC 31267 / DSM 46492 / JCM 5070 / NBRC 14893 / NCIMB 12804 / NRRL 8165 / MA-4680).